Consider the following 71-residue polypeptide: MSKQTKTFEENLAELEGIVTKLERGDVALEEALAEFQKGMVLSKDLQKTLAEAEKTLVKVMQADGSEAEMD.

This sequence belongs to the XseB family. As to quaternary structure, heterooligomer composed of large and small subunits.

It localises to the cytoplasm. It carries out the reaction Exonucleolytic cleavage in either 5'- to 3'- or 3'- to 5'-direction to yield nucleoside 5'-phosphates.. Its function is as follows. Bidirectionally degrades single-stranded DNA into large acid-insoluble oligonucleotides, which are then degraded further into small acid-soluble oligonucleotides. This is Exodeoxyribonuclease 7 small subunit from Streptococcus suis (strain 98HAH33).